A 150-amino-acid chain; its full sequence is UPF0201 protein APE_1751 (150 aa).

It belongs to the UPF0201 family.

This Aeropyrum pernix (strain ATCC 700893 / DSM 11879 / JCM 9820 / NBRC 100138 / K1) protein is UPF0201 protein APE_1751.